The following is a 741-amino-acid chain: MALAQQTRLVRVDSPLGAEVLQLQRMEGREELGRPFAYELELISENPDLPLDGLLGKPASLALELHDGSRRHFHGIVAACSQGSGNGQFASYQVTLRPWLWLLTRTSDCRIFQNQKVPDIIKQVFRDLGFSDFEDALSRSYREWEYCVQYRETSFDFVSRLMEQEGIYYWFRHEQSRHILVLSDAYGAHQSPPNYASVPYYPPTLEQRERDHFYDWHMAREVQSGSLSLNDYDFQRPGARLEVRSNIARSHAAADYPLYDYPGEYVQSQDGEQYARTRIEALQARYERVRLRGRARGLGSGHLFKLSGYPREDQNREYLVVGAEYRVVQELYETGGGGVGAQFESELDCIDAGQAYRPLPTTPLPIVRGPQTAVVVGPKGEEIWTDQYGRVKVHFHWDRHDQSNENSSCWIRVSQAWAGKNWGSMQIPRIGQEVIVSFLEGDPDRPIITGRVYNAEQTVPYELPANATQSGMKSRSSKGGTPANFNEIRMEDKKGAEQLFIHAEKNQDIEVENDETHWVGHDRTKTIDHDETVHVKHDRTETVDNNETITIGVDRTEKVGNNEKISIGANRTEDVGSNETISIGVDRTEKVGSNEKISIGANRTEDVGNDETISIGANRSESVGNNETISIGADRSESVGANETIDIGGNQSTSIGKNESRSVGQGRDTSVGKDDSLDVGKSFTLNAGDSITLVTGAASIRMKKDGSIVISGKNITIDGSGAINVKADKNVVVKGRKILQN.

Polar residues-rich tracts occupy residues 614 to 629 (SIGA…NETI) and 649 to 663 (GNQS…SRSV). The disordered stretch occupies residues 614-678 (SIGANRSESV…TSVGKDDSLD (65 aa)).

Belongs to the VgrG protein family.

The protein localises to the secreted. Part of the H1 type VI secretion system (H1-T6SS) specialized secretion system, which delivers several virulence factors in both prokaryotic and eukaryotic cells during infection. Allows the delivery of the Tse7 toxin to target cells where it exerts toxicity through its nuclease domain. In Pseudomonas aeruginosa (strain ATCC 15692 / DSM 22644 / CIP 104116 / JCM 14847 / LMG 12228 / 1C / PRS 101 / PAO1), this protein is Type VI secretion system spike protein VgrG1b.